The following is a 318-amino-acid chain: Ribose-phosphate pyrophosphokinase 2 (318 aa).

96 to 101 (RQDKKD) provides a ligand contact to ATP. Positions 128, 130, 139, and 143 each coordinate Mg(2+). Residue H130 participates in ATP binding. The tract at residues 212-227 (KDRVAILVDDMADTCG) is binding of phosphoribosylpyrophosphate.

This sequence belongs to the ribose-phosphate pyrophosphokinase family. Homodimer. The active form is probably a hexamer composed of 3 homodimers. Mg(2+) serves as cofactor.

It catalyses the reaction D-ribose 5-phosphate + ATP = 5-phospho-alpha-D-ribose 1-diphosphate + AMP + H(+). It functions in the pathway metabolic intermediate biosynthesis; 5-phospho-alpha-D-ribose 1-diphosphate biosynthesis; 5-phospho-alpha-D-ribose 1-diphosphate from D-ribose 5-phosphate (route I): step 1/1. Its activity is regulated as follows. Activated by magnesium and inorganic phosphate. Competitively or non-competitively inhibited by ADP, 2,3-bisphosphoglyceride or GDP. In terms of biological role, catalyzes the synthesis of phosphoribosylpyrophosphate (PRPP) that is essential for nucleotide synthesis. The sequence is that of Ribose-phosphate pyrophosphokinase 2 (prps2) from Xenopus laevis (African clawed frog).